The primary structure comprises 406 residues: Succinylornithine transaminase/acetylornithine aminotransferase (406 aa).

Residues 108-109 and Phe141 each bind pyridoxal 5'-phosphate; that span reads GA. Position 144 (Arg144) interacts with N(2)-acetyl-L-ornithine. 226–229 contributes to the pyridoxal 5'-phosphate binding site; the sequence is DEVQ. Lys255 is subject to N6-(pyridoxal phosphate)lysine. Thr283 serves as a coordination point for N(2)-acetyl-L-ornithine. Thr284 provides a ligand contact to pyridoxal 5'-phosphate.

It belongs to the class-III pyridoxal-phosphate-dependent aminotransferase family. ArgD subfamily. As to quaternary structure, homodimer. The cofactor is pyridoxal 5'-phosphate.

It is found in the cytoplasm. It catalyses the reaction N(2)-succinyl-L-ornithine + 2-oxoglutarate = N-succinyl-L-glutamate 5-semialdehyde + L-glutamate. It carries out the reaction N(2)-acetyl-L-ornithine + 2-oxoglutarate = N-acetyl-L-glutamate 5-semialdehyde + L-glutamate. Its pathway is amino-acid biosynthesis; L-arginine biosynthesis; N(2)-acetyl-L-ornithine from L-glutamate: step 4/4. The protein operates within amino-acid degradation; L-arginine degradation via AST pathway; L-glutamate and succinate from L-arginine: step 3/5. Its function is as follows. Transaminates both N(2)-acetylornithine and N(2)-succinylornithine. The polypeptide is Succinylornithine transaminase/acetylornithine aminotransferase (aruC) (Pseudomonas aeruginosa (strain ATCC 15692 / DSM 22644 / CIP 104116 / JCM 14847 / LMG 12228 / 1C / PRS 101 / PAO1)).